Reading from the N-terminus, the 109-residue chain is MSRISSLQDPFLNALRKEKVSVSVYLVNGIKLQGQVEAFDQFCIVLRNTVNQMVYKHAISTIVPAKSVRMVYSSFNPYHQNANDDQDENVDDIHSDELEVQENQENINE.

The Sm domain maps to 9–68 (DPFLNALRKEKVSVSVYLVNGIKLQGQVEAFDQFCIVLRNTVNQMVYKHAISTIVPAKSV).

This sequence belongs to the Hfq family. As to quaternary structure, homohexamer.

Functionally, RNA chaperone that binds small regulatory RNA (sRNAs) and mRNAs to facilitate mRNA translational regulation in response to envelope stress, environmental stress and changes in metabolite concentrations. Also binds with high specificity to tRNAs. The sequence is that of RNA-binding protein Hfq from Francisella philomiragia subsp. philomiragia (strain ATCC 25017 / CCUG 19701 / FSC 153 / O#319-036).